Here is an 89-residue protein sequence, read N- to C-terminus: Small ribosomal subunit protein bS20 (89 aa).

The span at 1–11 (MANHKSAEKRN) shows a compositional bias: basic and acidic residues. Residues 1 to 30 (MANHKSAEKRNRQNQVARLRNKSTRTAMKN) form a disordered region.

Belongs to the bacterial ribosomal protein bS20 family.

In terms of biological role, binds directly to 16S ribosomal RNA. The protein is Small ribosomal subunit protein bS20 of Desulfotalea psychrophila (strain LSv54 / DSM 12343).